The following is a 336-amino-acid chain: Holliday junction branch migration complex subunit RuvB (336 aa).

Residues 4–184 (ADRLVSADSS…FGIVQRLEFY (181 aa)) form a large ATPase domain (RuvB-L) region. Residues Ile23, Arg24, Gly65, Lys68, Thr69, Thr70, 131-133 (EDY), Arg174, Tyr184, and Arg221 contribute to the ATP site. Thr69 provides a ligand contact to Mg(2+). Residues 185 to 255 (QIPDLQHIVS…IAAQALDMLN (71 aa)) are small ATPAse domain (RuvB-S). The head domain (RuvB-H) stretch occupies residues 258–336 (AEGFDYMDRK…HFGITPPEMP (79 aa)). DNA contacts are provided by Arg294, Arg313, and Arg318.

Belongs to the RuvB family. In terms of assembly, homohexamer. Forms an RuvA(8)-RuvB(12)-Holliday junction (HJ) complex. HJ DNA is sandwiched between 2 RuvA tetramers; dsDNA enters through RuvA and exits via RuvB. An RuvB hexamer assembles on each DNA strand where it exits the tetramer. Each RuvB hexamer is contacted by two RuvA subunits (via domain III) on 2 adjacent RuvB subunits; this complex drives branch migration. In the full resolvosome a probable DNA-RuvA(4)-RuvB(12)-RuvC(2) complex forms which resolves the HJ.

It is found in the cytoplasm. It carries out the reaction ATP + H2O = ADP + phosphate + H(+). In terms of biological role, the RuvA-RuvB-RuvC complex processes Holliday junction (HJ) DNA during genetic recombination and DNA repair, while the RuvA-RuvB complex plays an important role in the rescue of blocked DNA replication forks via replication fork reversal (RFR). RuvA specifically binds to HJ cruciform DNA, conferring on it an open structure. The RuvB hexamer acts as an ATP-dependent pump, pulling dsDNA into and through the RuvAB complex. RuvB forms 2 homohexamers on either side of HJ DNA bound by 1 or 2 RuvA tetramers; 4 subunits per hexamer contact DNA at a time. Coordinated motions by a converter formed by DNA-disengaged RuvB subunits stimulates ATP hydrolysis and nucleotide exchange. Immobilization of the converter enables RuvB to convert the ATP-contained energy into a lever motion, pulling 2 nucleotides of DNA out of the RuvA tetramer per ATP hydrolyzed, thus driving DNA branch migration. The RuvB motors rotate together with the DNA substrate, which together with the progressing nucleotide cycle form the mechanistic basis for DNA recombination by continuous HJ branch migration. Branch migration allows RuvC to scan DNA until it finds its consensus sequence, where it cleaves and resolves cruciform DNA. The chain is Holliday junction branch migration complex subunit RuvB from Klebsiella pneumoniae (strain 342).